We begin with the raw amino-acid sequence, 376 residues long: UPF0754 membrane protein BH1148 (376 aa).

2 helical membrane passes run 3 to 23 (LILF…SLAI) and 355 to 375 (YLGA…ILLI).

The protein belongs to the UPF0754 family.

Its subcellular location is the cell membrane. In Halalkalibacterium halodurans (strain ATCC BAA-125 / DSM 18197 / FERM 7344 / JCM 9153 / C-125) (Bacillus halodurans), this protein is UPF0754 membrane protein BH1148.